The chain runs to 370 residues: Putative methylthioribose-1-phosphate isomerase (370 aa).

Substrate-binding positions include 66 to 68 (RGA), Arg-109, and Gln-217. The active-site Proton donor is Asp-258. 268–269 (NK) serves as a coordination point for substrate.

It belongs to the eIF-2B alpha/beta/delta subunits family. MtnA subfamily.

It carries out the reaction 5-(methylsulfanyl)-alpha-D-ribose 1-phosphate = 5-(methylsulfanyl)-D-ribulose 1-phosphate. Functionally, catalyzes the interconversion of methylthioribose-1-phosphate (MTR-1-P) into methylthioribulose-1-phosphate (MTRu-1-P). This is Putative methylthioribose-1-phosphate isomerase from Aeropyrum pernix (strain ATCC 700893 / DSM 11879 / JCM 9820 / NBRC 100138 / K1).